Reading from the N-terminus, the 171-residue chain is N5-carboxyaminoimidazole ribonucleotide mutase (171 aa).

Ser10, Asp13, and Arg40 together coordinate substrate.

The protein belongs to the AIR carboxylase family. Class I subfamily.

The enzyme catalyses 5-carboxyamino-1-(5-phospho-D-ribosyl)imidazole + H(+) = 5-amino-1-(5-phospho-D-ribosyl)imidazole-4-carboxylate. The protein operates within purine metabolism; IMP biosynthesis via de novo pathway; 5-amino-1-(5-phospho-D-ribosyl)imidazole-4-carboxylate from 5-amino-1-(5-phospho-D-ribosyl)imidazole (N5-CAIR route): step 2/2. Its function is as follows. Catalyzes the conversion of N5-carboxyaminoimidazole ribonucleotide (N5-CAIR) to 4-carboxy-5-aminoimidazole ribonucleotide (CAIR). This chain is N5-carboxyaminoimidazole ribonucleotide mutase, found in Thermotoga maritima (strain ATCC 43589 / DSM 3109 / JCM 10099 / NBRC 100826 / MSB8).